Reading from the N-terminus, the 874-residue chain is Probable inorganic carbon transporter subunit DabA (874 aa).

The Zn(2+) site is built by Cys398, Asp400, His580, and Cys595.

Belongs to the inorganic carbon transporter (TC 9.A.2) DabA family. As to quaternary structure, forms a complex with DabB. Requires Zn(2+) as cofactor.

It localises to the cell membrane. Its function is as follows. Part of an energy-coupled inorganic carbon pump. In Bacillus anthracis (strain A0248), this protein is Probable inorganic carbon transporter subunit DabA.